A 141-amino-acid polypeptide reads, in one-letter code: MAKKITGFIKLQIPAGGANPAPPVGPALGQKGVNIMEFCKQFNAKTQSEAGMIIPVVITVYSDKSFTFVTKTPPAAVLLLKEAKLQKGSGEPNRNKVGTVTMDQVRKIAELKRPDLNSIDLEGATQMVIGTARSMGIVVEG.

The protein belongs to the universal ribosomal protein uL11 family. As to quaternary structure, part of the ribosomal stalk of the 50S ribosomal subunit. Interacts with L10 and the large rRNA to form the base of the stalk. L10 forms an elongated spine to which L12 dimers bind in a sequential fashion forming a multimeric L10(L12)X complex. In terms of processing, one or more lysine residues are methylated.

Functionally, forms part of the ribosomal stalk which helps the ribosome interact with GTP-bound translation factors. This is Large ribosomal subunit protein uL11 from Chlorobaculum tepidum (strain ATCC 49652 / DSM 12025 / NBRC 103806 / TLS) (Chlorobium tepidum).